Consider the following 161-residue polypeptide: Dihydrofolate reductase type 1 from Tn4003 (161 aa).

The 156-residue stretch at 2–157 (TLSIIVAHDK…IPHTFLHLVR (156 aa)) folds into the DHFR domain. A substrate-binding site is contributed by 6–8 (IVA). Residues 7-8 (VA) and 15-20 (IGYQNQ) contribute to the NADP(+) site. A substrate-binding site is contributed by aspartate 28. 44 to 47 (ARKT) is an NADP(+) binding site. Substrate is bound at residue arginine 58. NADP(+)-binding positions include 63–66 (LTNQ) and 93–98 (FGGQTL). Threonine 112 is a substrate binding site.

It belongs to the dihydrofolate reductase family.

It carries out the reaction (6S)-5,6,7,8-tetrahydrofolate + NADP(+) = 7,8-dihydrofolate + NADPH + H(+). It participates in cofactor biosynthesis; tetrahydrofolate biosynthesis; 5,6,7,8-tetrahydrofolate from 7,8-dihydrofolate: step 1/1. Its function is as follows. Key enzyme in folate metabolism. Catalyzes an essential reaction for de novo glycine and purine synthesis, and for DNA precursor synthesis. The protein is Dihydrofolate reductase type 1 from Tn4003 (dfrA) of Staphylococcus aureus.